The following is a 225-amino-acid chain: MIRLPFRDGYYEVRPTKIIALAKNYAEHAREMGSEPPEEPVIFLKPPSALIGPNSVIVLPRRSKRVDHEVELAVIIGKRAKNVPAEKAFDYILGYTILLDITARDLQAEARKKGYPWTVSKGFDTFAPIGPRIVDKRELDPSDLEIGLKVNGKVRQLGRTSEMIFKIPELIEYISSIMTLEPGDIIATGTPPGVGPLRHGDKIEAWVEGIGVLEEEVIAEDSILC.

Positions 69, 71, and 100 each coordinate a divalent metal cation.

The protein belongs to the FAH family.

This is an uncharacterized protein from Pyrococcus abyssi (strain GE5 / Orsay).